Consider the following 413-residue polypeptide: Aminopeptidase PepS (413 aa).

Residues Glu-253, Glu-319, Glu-343, His-348, His-381, and Asp-383 each contribute to the a divalent metal cation site.

The protein belongs to the peptidase M29 family. As to quaternary structure, monomer. Co(2+) serves as cofactor. Zn(2+) is required as a cofactor. Requires Mg(2+) as cofactor.

Functionally, exhibits a high specificity towards peptides possessing arginine or aromatic amino acids at the N-terminus. Could be involved both in bacterial growth by supplying amino acids. The protein is Aminopeptidase PepS (pepS) of Streptococcus thermophilus.